Here is a 429-residue protein sequence, read N- to C-terminus: Putative protease Do-like 14 (429 aa).

The disordered stretch occupies residues 87 to 113 (KSEAPINDEKGVSVEASDSSSKPSNGY). A serine protease region spans residues 113–338 (YLGRDTIANA…IRPWIGLKMV (226 aa)). Active-site charge relay system residues include histidine 165, aspartate 203, and serine 281. A PDZ domain is found at 318–424 (IIEHFKKSGR…RVTLEVIPEE (107 aa)).

The protein belongs to the peptidase S1C family.

In terms of biological role, putative serine protease. The sequence is that of Putative protease Do-like 14 (DEGP14) from Arabidopsis thaliana (Mouse-ear cress).